The following is a 582-amino-acid chain: Aspartate--tRNA(Asp/Asn) ligase (582 aa).

Residue E177 coordinates L-aspartate. The aspartate stretch occupies residues 201–204 (QLFK). Residue R223 participates in L-aspartate binding. Residues 223–225 (RDE) and Q232 each bind ATP. L-aspartate is bound at residue H447. Position 481 (E481) interacts with ATP. Residue R488 participates in L-aspartate binding. ATP is bound at residue 533-536 (GLDR).

This sequence belongs to the class-II aminoacyl-tRNA synthetase family. Type 1 subfamily. As to quaternary structure, homodimer.

The protein localises to the cytoplasm. It carries out the reaction tRNA(Asx) + L-aspartate + ATP = L-aspartyl-tRNA(Asx) + AMP + diphosphate. Aspartyl-tRNA synthetase with relaxed tRNA specificity since it is able to aspartylate not only its cognate tRNA(Asp) but also tRNA(Asn). Reaction proceeds in two steps: L-aspartate is first activated by ATP to form Asp-AMP and then transferred to the acceptor end of tRNA(Asp/Asn). This is Aspartate--tRNA(Asp/Asn) ligase from Chlamydia trachomatis serovar L2 (strain ATCC VR-902B / DSM 19102 / 434/Bu).